A 275-amino-acid polypeptide reads, in one-letter code: NH(3)-dependent NAD(+) synthetase (275 aa).

46–53 (GISGGQDS) provides a ligand contact to ATP. Mg(2+) is bound at residue Asp-52. Arg-140 contacts deamido-NAD(+). Thr-160 contributes to the ATP binding site. Residue Glu-165 coordinates Mg(2+). Deamido-NAD(+) is bound by residues Lys-173 and Asp-180. Residues Lys-189 and Thr-211 each coordinate ATP. 260–261 (HK) is a deamido-NAD(+) binding site.

This sequence belongs to the NAD synthetase family. Homodimer.

The catalysed reaction is deamido-NAD(+) + NH4(+) + ATP = AMP + diphosphate + NAD(+) + H(+). It participates in cofactor biosynthesis; NAD(+) biosynthesis; NAD(+) from deamido-NAD(+) (ammonia route): step 1/1. In terms of biological role, catalyzes the ATP-dependent amidation of deamido-NAD to form NAD. Uses ammonia as a nitrogen source. In Shigella boydii serotype 18 (strain CDC 3083-94 / BS512), this protein is NH(3)-dependent NAD(+) synthetase.